Reading from the N-terminus, the 409-residue chain is DNA replication and repair protein RecF (409 aa).

30 to 37 (GSNGHGKT) contributes to the ATP binding site.

The protein belongs to the RecF family.

The protein resides in the cytoplasm. Its function is as follows. The RecF protein is involved in DNA metabolism; it is required for DNA replication and normal SOS inducibility. RecF binds preferentially to single-stranded, linear DNA. It also seems to bind ATP. The polypeptide is DNA replication and repair protein RecF (Rhodococcus erythropolis (strain PR4 / NBRC 100887)).